Reading from the N-terminus, the 323-residue chain is Fructose-1,6-bisphosphatase class 1 (323 aa).

4 residues coordinate Mg(2+): glutamate 88, aspartate 107, leucine 109, and aspartate 110. Substrate is bound by residues 110 to 113 (DGSS) and asparagine 200. Glutamate 272 serves as a coordination point for Mg(2+).

The protein belongs to the FBPase class 1 family. Homotetramer. It depends on Mg(2+) as a cofactor.

It is found in the cytoplasm. The enzyme catalyses beta-D-fructose 1,6-bisphosphate + H2O = beta-D-fructose 6-phosphate + phosphate. It participates in carbohydrate biosynthesis; gluconeogenesis. The polypeptide is Fructose-1,6-bisphosphatase class 1 (Acinetobacter baumannii (strain AYE)).